We begin with the raw amino-acid sequence, 554 residues long: Glucose-6-phosphate isomerase (554 aa).

The Proton donor role is filled by E359. Catalysis depends on residues H390 and K518.

This sequence belongs to the GPI family.

The protein resides in the cytoplasm. The catalysed reaction is alpha-D-glucose 6-phosphate = beta-D-fructose 6-phosphate. It participates in carbohydrate biosynthesis; gluconeogenesis. The protein operates within carbohydrate degradation; glycolysis; D-glyceraldehyde 3-phosphate and glycerone phosphate from D-glucose: step 2/4. Functionally, catalyzes the reversible isomerization of glucose-6-phosphate to fructose-6-phosphate. The polypeptide is Glucose-6-phosphate isomerase (Pseudomonas putida (strain W619)).